Consider the following 597-residue polypeptide: MQNIRNFSIIAHIDHGKSTLSDRLIQTCGGLSDREMEAQVLDSMDLERERGITIKAQSVTLHYKAKDGETYQLNFIDTPGHVDFSYEVSRSLAACEGALLVVDAGQGVEAQTLANCYTAIEMDLEVVPVLNKIDLPAAEPERVAEEIEDIVGIDAIDAVHCSAKTGFGIENVLEDIVKKIPAPEGDPEAPLQALIIDSWFDNYLGVVSLVRVKNGSIKKGDKIKVMTTGQSYNVDRLGIFTPKQVDTTELKTGEVGWVVCAIKDILGAPVGDTLTHQHHSATEVLPGFKKVKPQVYAGLFPISSDDYEAFRDALGKLSLNDASLFYEPENSTALGFGFRCGFLGLLHMEIIQERLEREYDLDLITTAPTVVYEVLQTNGETIYVDSPSKLPPISNIDEIREPIAECNMLVPQEYLGNIITLCVEKRGIQTNMVYHGNQIALTYEIPMGEVVLDFFDRLKSTSRGYASLDYSFKRFQTADMVRVDIMINSERVDALALIVHKDNAAYRGRELVEKMKELIPRQQFDIAIQAAIGNHIIARSTVKQLRKNVLAKCYGGDVSRKKKLLQKQKEGKKRMKSLGNVEVPQEAFLAILHVGKD.

The tr-type G domain maps to glutamine 2–glutamate 184. Residues aspartate 14 to threonine 19 and asparagine 131 to aspartate 134 each bind GTP.

The protein belongs to the TRAFAC class translation factor GTPase superfamily. Classic translation factor GTPase family. LepA subfamily.

The protein resides in the cell inner membrane. The enzyme catalyses GTP + H2O = GDP + phosphate + H(+). In terms of biological role, required for accurate and efficient protein synthesis under certain stress conditions. May act as a fidelity factor of the translation reaction, by catalyzing a one-codon backward translocation of tRNAs on improperly translocated ribosomes. Back-translocation proceeds from a post-translocation (POST) complex to a pre-translocation (PRE) complex, thus giving elongation factor G a second chance to translocate the tRNAs correctly. Binds to ribosomes in a GTP-dependent manner. The sequence is that of Elongation factor 4 from Haemophilus ducreyi (strain 35000HP / ATCC 700724).